The following is a 425-amino-acid chain: Trigger factor (425 aa).

Residues 163–248 form the PPIase FKBP-type domain; it reads GDTAVIDFEG…VHEIKTKELP (86 aa).

Belongs to the FKBP-type PPIase family. Tig subfamily.

The protein resides in the cytoplasm. The catalysed reaction is [protein]-peptidylproline (omega=180) = [protein]-peptidylproline (omega=0). In terms of biological role, involved in protein export. Acts as a chaperone by maintaining the newly synthesized protein in an open conformation. Functions as a peptidyl-prolyl cis-trans isomerase. In Bacillus cereus (strain Q1), this protein is Trigger factor.